A 387-amino-acid chain; its full sequence is Phosphoglycerate kinase (387 aa).

Residues 21–23 (DLN), Arg-36, 59–62 (HLGR), Arg-113, and Arg-146 each bind substrate. ATP-binding positions include Lys-197, Glu-314, and 340–343 (GGDT).

The protein belongs to the phosphoglycerate kinase family. In terms of assembly, monomer.

The protein resides in the cytoplasm. It catalyses the reaction (2R)-3-phosphoglycerate + ATP = (2R)-3-phospho-glyceroyl phosphate + ADP. The protein operates within carbohydrate degradation; glycolysis; pyruvate from D-glyceraldehyde 3-phosphate: step 2/5. The chain is Phosphoglycerate kinase from Pseudomonas putida (strain ATCC 47054 / DSM 6125 / CFBP 8728 / NCIMB 11950 / KT2440).